A 687-amino-acid chain; its full sequence is POZ (BTB) and AT hook-containing zinc finger 1 (687 aa).

The region spanning 41–130 (CDVLLRVGDE…AYTSRIVVRL (90 aa)) is the BTB domain. The segment covering 250 to 260 (PFPNVASSAPP) has biased composition (polar residues). The segment at 250 to 279 (PFPNVASSAPPLTSKRGRGRPRKANLLDSM) is disordered. The segment at 292–314 (LPCGLCGKVFTDANRLRQHEAQH) adopts a C2H2-type 1 zinc-finger fold. A disordered region spans residues 332–351 (GENGLPISEDPDGPRKRSRT). 5 C2H2-type zinc fingers span residues 355-377 (VACEICGKIFRDVYHLNRHKLSH), 383-405 (YSCPVCGLRFKRKDRMSYHVRSH), 413-436 (YICQSCGKGFSRPDHLNGHIKQVH), 442-464 (HKCQTCNASFATRDRLRSHLACH), and 495-517 (NFCSICNRGFSSASYLKVHVKTH). Residues 564–587 (SYGDLSDASDLKTPEKQSANGSFS) form a disordered region. The C2H2-type 7 zinc finger occupies 605-628 (YPCPECGSFFRSKSYLNKHIQKVH).

Homodimer. Interacts with RNF4. Interacts (via C-terminus) with TP53; this interaction inhibits TP53 ability to activate transcription. In terms of tissue distribution, widely expressed at high levels during embryogenesis, especially in the central nervous system, especially to the actively proliferating neuroblasts in the periventricular neocortical neuroepithelium, in the telencephalic cortical plate and in the hippocampus. Also expressed in a stage-specific manner in the mouse germinal epithelium. While strongly expressed during brain development,m its expression turns down in adult brain.

Its subcellular location is the nucleus. Functionally, transcriptional regulator that plays a role in many biological processes such as embryogenesis, senescence, T-cell development or neurogenesis. Interacts with the TP53 protein to control genes that are important in proliferation and in the DNA-damage response. Mechanistically, the interaction inhibits the DNA binding and transcriptional activity of TP53/p53. Part of the transcriptional network modulating regulatory T-cell development and controls the generation of the regulatory T-cell pool under homeostatic conditions. The protein is POZ (BTB) and AT hook-containing zinc finger 1 of Mus musculus (Mouse).